The sequence spans 364 residues: Coproporphyrin III ferrochelatase (364 aa).

Fe-coproporphyrin III is bound by residues arginine 29 and tyrosine 118. Residues histidine 169 and glutamate 250 each contribute to the Fe(2+) site.

Belongs to the ferrochelatase family.

The protein resides in the cytoplasm. It catalyses the reaction Fe-coproporphyrin III + 2 H(+) = coproporphyrin III + Fe(2+). It functions in the pathway porphyrin-containing compound metabolism; protoheme biosynthesis. Its function is as follows. Involved in coproporphyrin-dependent heme b biosynthesis. Catalyzes the insertion of ferrous iron into coproporphyrin III to form Fe-coproporphyrin III. The polypeptide is Coproporphyrin III ferrochelatase (Streptococcus pneumoniae (strain ATCC 700669 / Spain 23F-1)).